The chain runs to 224 residues: MAARLLWAVRRRMQPLAAHAASEGRGWLHPFSTATQRTAGEDCNSEDPPDELGPSLAERALKLKAVKLEKEVQDLTVRYQRAVADSENIRRRTQRCVEDAKIFGIQSFCKDLVEVADILEKTTECISEETEPADQKLTLEKIFRGLSLLEAKLKSVFAKHGLEKMTPIGDKYDPHEHELICHVPAGVGVQPGTVAFVRQDGYKLHGRTIRLAQVEVAVESQRRL.

The transit peptide at 1-31 directs the protein to the mitochondrion; sequence MAARLLWAVRRRMQPLAAHAASEGRGWLHPF. Lys141 bears the N6-acetyllysine mark.

The protein belongs to the GrpE family. As to quaternary structure, probable component of the PAM complex at least composed of a mitochondrial HSP70 protein, GRPEL1 or GRPEL2, TIMM44, TIMM16/PAM16 and TIMM14/DNAJC19.

It is found in the mitochondrion matrix. Essential component of the PAM complex, a complex required for the translocation of transit peptide-containing proteins from the inner membrane into the mitochondrial matrix in an ATP-dependent manner. Seems to control the nucleotide-dependent binding of mitochondrial HSP70 to substrate proteins. Stimulates ATPase activity of mt-HSP70. May also serve to modulate the interconversion of oligomeric (inactive) and monomeric (active) forms of mt-HSP70. This Bos taurus (Bovine) protein is GrpE protein homolog 2, mitochondrial (GRPEL2).